The following is a 319-amino-acid chain: Annexin A4 (319 aa).

Residue A2 is modified to N-acetylalanine. Position 7 is a phosphothreonine; by PKC (T7). A Phosphoserine modification is found at S12. Annexin repeat units lie at residues 14–85 (FNAA…GMMT), 86–157 (PTVL…SLSA), 169–241 (ALVR…AIVK), and 245–316 (NKSA…ILCG). N6-acetyllysine is present on residues K213, K293, and K300.

Belongs to the annexin family. In terms of assembly, monomer.

Its subcellular location is the zymogen granule membrane. Calcium/phospholipid-binding protein which promotes membrane fusion and is involved in exocytosis. The polypeptide is Annexin A4 (ANXA4) (Sus scrofa (Pig)).